A 614-amino-acid chain; its full sequence is UvrABC system protein C (614 aa).

In terms of domain architecture, GIY-YIG spans 20–98 (TAPGVYRMYA…IKSLSPRYNV (79 aa)). One can recognise a UVR domain in the interval 207–242 (DELTRELGEQMQAASEALEFEQAARLRDLISSLRSM).

It belongs to the UvrC family. Interacts with UvrB in an incision complex.

The protein localises to the cytoplasm. Functionally, the UvrABC repair system catalyzes the recognition and processing of DNA lesions. UvrC both incises the 5' and 3' sides of the lesion. The N-terminal half is responsible for the 3' incision and the C-terminal half is responsible for the 5' incision. The sequence is that of UvrABC system protein C from Stenotrophomonas maltophilia (strain R551-3).